Reading from the N-terminus, the 79-residue chain is Defensin-like protein 109 (79 aa).

The N-terminal stretch at 1-24 (MDFTKKILVVFAFTIMLGISSVHC) is a signal peptide. Disulfide bonds link C41/C76, C47/C68, C54/C74, and C58/C75.

It belongs to the DEFL family.

The protein resides in the secreted. The polypeptide is Defensin-like protein 109 (Arabidopsis thaliana (Mouse-ear cress)).